The primary structure comprises 329 residues: MQSAVNEFLTPRHIDVTELGPTRAKVVLEPLERGFGHTLGNALRRILLSSMPGCAVTEVEIDGVQHEYSAIEGVQEDVIEILLNLKNVAVVMHGKDQAVLSLSKQGPGAVTAGDIQVDHDIEIKNPELVIANITSDTSLSMRLTVSRGRGYQPVDARATDEDETRAIGRLQLDASFSPVRRLAYSVESARVEQRTDLDKLVLDLETNGTIDPEEAIRRAATILQQQLAVFVDLEGEKEAEPEQKEDQIDPVLLRPVDDLELTVRSANCLKAENIYYIGDLIQRTEVELLKTPNLGKKSLTEIKDILASRGLSLGMRLENWPPASLKNND.

The segment at methionine 1–glutamate 234 is alpha N-terminal domain (alpha-NTD). The segment at isoleucine 248–aspartate 329 is alpha C-terminal domain (alpha-CTD).

Belongs to the RNA polymerase alpha chain family. Homodimer. The RNAP catalytic core consists of 2 alpha, 1 beta, 1 beta' and 1 omega subunit. When a sigma factor is associated with the core the holoenzyme is formed, which can initiate transcription.

The catalysed reaction is RNA(n) + a ribonucleoside 5'-triphosphate = RNA(n+1) + diphosphate. Functionally, DNA-dependent RNA polymerase catalyzes the transcription of DNA into RNA using the four ribonucleoside triphosphates as substrates. The chain is DNA-directed RNA polymerase subunit alpha from Saccharophagus degradans (strain 2-40 / ATCC 43961 / DSM 17024).